The sequence spans 475 residues: Cytochrome P450 monooxygenase opdE (475 aa).

A helical transmembrane segment spans residues 10-32 (VQNIPVLLLSCGFLAILFRSLVL). Position 457 (C457) interacts with heme.

The protein belongs to the cytochrome P450 family. Heme serves as cofactor.

Its subcellular location is the membrane. Its pathway is secondary metabolite biosynthesis. Its function is as follows. Cytochrome P450 monooxygenase; part of the gene cluster that mediates the biosynthesis of oxopyrrolidines, polyketide-amino acid hybrid compounds with feature structures of tetramic acid. Does not seem to play a role in oxopyrrolidines A and B biosynthesis. May be involved in further modifications of these oxopyrrolidines. The protein is Cytochrome P450 monooxygenase opdE of Penicillium oxalicum (strain 114-2 / CGMCC 5302) (Penicillium decumbens).